Reading from the N-terminus, the 336-residue chain is Phosphate acyltransferase (336 aa).

The protein belongs to the PlsX family. As to quaternary structure, homodimer. Probably interacts with PlsY.

The protein resides in the cytoplasm. The catalysed reaction is a fatty acyl-[ACP] + phosphate = an acyl phosphate + holo-[ACP]. Its pathway is lipid metabolism; phospholipid metabolism. In terms of biological role, catalyzes the reversible formation of acyl-phosphate (acyl-PO(4)) from acyl-[acyl-carrier-protein] (acyl-ACP). This enzyme utilizes acyl-ACP as fatty acyl donor, but not acyl-CoA. This is Phosphate acyltransferase from Pseudomonas putida (strain ATCC 700007 / DSM 6899 / JCM 31910 / BCRC 17059 / LMG 24140 / F1).